We begin with the raw amino-acid sequence, 265 residues long: Undecaprenyl-diphosphatase (265 aa).

7 consecutive transmembrane segments (helical) span residues 38–58 (SDMF…IIYW), 80–100 (LIVA…LGFE), 107–127 (PIAW…WAAA), 135–155 (ITWL…VFPG), 175–195 (AAAT…ASGY), 213–233 (ALAI…KWLL), and 244–264 (FAIY…TGMI).

It belongs to the UppP family.

The protein localises to the cell inner membrane. It catalyses the reaction di-trans,octa-cis-undecaprenyl diphosphate + H2O = di-trans,octa-cis-undecaprenyl phosphate + phosphate + H(+). In terms of biological role, catalyzes the dephosphorylation of undecaprenyl diphosphate (UPP). Confers resistance to bacitracin. The polypeptide is Undecaprenyl-diphosphatase (Rhizobium etli (strain ATCC 51251 / DSM 11541 / JCM 21823 / NBRC 15573 / CFN 42)).